A 788-amino-acid chain; its full sequence is Protein translocase subunit SecA 2 (788 aa).

Residues Gln86, 104-108, and Asp493 each bind ATP; that span reads GEGKT.

It belongs to the SecA family. As to quaternary structure, monomer and homodimer. Part of the essential Sec protein translocation apparatus which comprises SecA, SecYEG and auxiliary proteins SecDF. Other proteins may also be involved.

The protein resides in the cell membrane. The protein localises to the cytoplasm. It carries out the reaction ATP + H2O + cellular proteinSide 1 = ADP + phosphate + cellular proteinSide 2.. Functionally, part of the Sec protein translocase complex. Interacts with the SecYEG preprotein conducting channel. Has a central role in coupling the hydrolysis of ATP to the transfer of proteins into and across the cell membrane, serving as an ATP-driven molecular motor driving the stepwise translocation of polypeptide chains across the membrane. This chain is Protein translocase subunit SecA 2, found in Geobacillus thermodenitrificans (strain NG80-2).